The primary structure comprises 196 residues: HTH-type transcriptional regulator EcpR (196 aa).

The 59-residue stretch at 138–196 folds into the HTH luxR-type domain; that stretch reads KDIKKDKITDREMEIIRMTAQGMQPKSIARIENCSVKTVYTHRRNAEAKLYSKIYKLVQ. The H-T-H motif DNA-binding region spans 162-181; that stretch reads PKSIARIENCSVKTVYTHRR.

It belongs to the EcpR/MatA family.

It localises to the cytoplasm. Part of the ecpRABCDE operon, which encodes the E.coli common pilus (ECP). ECP is found in both commensal and pathogenic strains and plays a dual role in early-stage biofilm development and host cell recognition. Positively regulates the expression of the ecp operon. This Escherichia coli (strain SE11) protein is HTH-type transcriptional regulator EcpR (ecpR).